Here is an 85-residue protein sequence, read N- to C-terminus: Progonadoliberin-2 (85 aa).

A signal peptide spans 1-23; the sequence is MCASRLVLLLGLLLCVGAHLSSG. Position 24 is a pyrrolidone carboxylic acid (Gln24). Gly33 bears the Glycine amide mark.

It belongs to the GnRH family. As to expression, midbrain tegmentum.

Its subcellular location is the secreted. Stimulates the secretion of gonadotropins. This is Progonadoliberin-2 (gnrh2) from Verasper moseri (Barfin flounder).